We begin with the raw amino-acid sequence, 62 residues long: LKKSLFLVLFLGLVSLSICEEEKRETEEKENEQEDDKSEEKRLLSLVPHAINAVSAIAKHFG.

A signal peptide spans 1–19 (LKKSLFLVLFLGLVSLSIC). A propeptide spanning residues 20 to 40 (EEEKRETEEKENEQEDDKSEE) is cleaved from the precursor. Phenylalanine 61 is subject to Phenylalanine amide.

Belongs to the frog skin active peptide (FSAP) family. Phylloseptin subfamily. As to expression, expressed by the skin glands.

Its subcellular location is the secreted. Its function is as follows. Has antimicrobial activity. The protein is Phylloseptin-Az7 (psn15) of Pithecopus azureus (Orange-legged monkey tree frog).